The primary structure comprises 541 residues: Halolysin-like extracellular serine protease Nep (541 aa).

A signal peptide (tat-type signal) is located at residues 1 to 33; that stretch reads MTRDTNSNVGRRSVLKAASALGAFLGLGGVASA. Positions 34 to 121 are excised as a propeptide; it reads TPGREPGPKK…DNATYETLEV (88 aa). One can recognise a Peptidase S8 domain in the interval 130–405; the sequence is QYAPQQVNCE…YGRVDAELAV (276 aa). Active-site charge relay system residues include Asp-157, His-198, and Ser-351. Residues 403–453 form a disordered region; sequence LAVTTDPDNGDDDDDDDDDEDDPGDGECGDETNTATADGELSGGWGGNPSD. Residues 410–432 show a composition bias toward acidic residues; the sequence is DNGDDDDDDDDDEDDPGDGECGD.

It belongs to the peptidase S8 family. In terms of assembly, monomer. Exported by the Tat system. The position of the signal peptide cleavage has not been experimentally proven. After transport across the membrane, the propeptide is probably processed autocatalytically, yielding the mature fully active protease.

It is found in the secreted. Its activity is regulated as follows. Dependent on high salt concentrations for activity and stability. Strongly inhibited by the serine protease inhibitors diisopropyl fluorophosphate (DFP), phenylmethyl sulfonylfluoride (PMSF) and chymostatin. Also inhibited by denaturing agents such as SDS, urea, and HCl guanidinium. Activated by thiol-containing reducing agents such as dithiotreitol (DTT) and 2-mercaptoethanol. In terms of biological role, serine protease that hydrolyzes large proteins such as casein and gelatin. Cleaves preferentially at the carboxyl terminus of Phe, Tyr or Leu. Is also able to catalyze peptide synthesis under different salt concentrations in the presence of dimethyl sulfoxide (DMSO). This chain is Halolysin-like extracellular serine protease Nep, found in Natrialba magadii.